A 443-amino-acid polypeptide reads, in one-letter code: Probable D-serine dehydratase (443 aa).

N6-(pyridoxal phosphate)lysine is present on lysine 118.

It belongs to the serine/threonine dehydratase family. DsdA subfamily. The cofactor is pyridoxal 5'-phosphate.

The catalysed reaction is D-serine = pyruvate + NH4(+). In Vibrio campbellii (strain ATCC BAA-1116), this protein is Probable D-serine dehydratase.